We begin with the raw amino-acid sequence, 412 residues long: MKKQIIERLTRYVKIDTQSNPDSKTTPSTNKQWDLLNLLEEELQSLGLKTDMDEHGYLFATLESNINYNVPTVGFLAHVDTSPDFNASHVNPQIIEAYNGQPIKLGESQRILDPDVFPELNKVVGHTLMVTDGTSLLGADDKAGVVEIMEGIKYLIDHPDIKHGTIRVGFTPDEEIGRGPHQFDVSRFNADFAYTMDGSQLGELQFESFNAAEVTVTCHGVNVHPGSAKNAMVNAISLGQQFNSLLPSHEVPERTEGYEGFYHLMNFTGNVEKATLQYIIRDHDKEQFELRKKRMMEIRDDINVHYNHFPIKVDVHDQYFNMAEKIEPLKHIIDIPKRVFEALDIVPNTEPIRGGTDGSQLSFMGLPTPNIFTGCGNFHGPFEYASIDVMEKAVHVVVGIAQEVANSHQSYK.

His78 is a Zn(2+) binding site. The active site involves Asp80. A Zn(2+)-binding site is contributed by Asp140. Residue Glu174 is the Proton acceptor of the active site. Zn(2+) contacts are provided by Glu175, Asp197, and His379.

The protein belongs to the peptidase M20B family. Requires Zn(2+) as cofactor.

The protein localises to the cytoplasm. The enzyme catalyses Release of the N-terminal residue from a tripeptide.. Cleaves the N-terminal amino acid of tripeptides. The protein is Peptidase T of Staphylococcus epidermidis (strain ATCC 12228 / FDA PCI 1200).